Consider the following 431-residue polypeptide: Enolase (431 aa).

(2R)-2-phosphoglycerate is bound at residue Gln163. The active-site Proton donor is Glu205. Mg(2+) is bound by residues Asp242, Glu288, and Asp315. 4 residues coordinate (2R)-2-phosphoglycerate: Lys340, Arg369, Ser370, and Lys391. Lys340 functions as the Proton acceptor in the catalytic mechanism.

It belongs to the enolase family. It depends on Mg(2+) as a cofactor.

The protein resides in the cytoplasm. Its subcellular location is the secreted. It localises to the cell surface. The enzyme catalyses (2R)-2-phosphoglycerate = phosphoenolpyruvate + H2O. Its pathway is carbohydrate degradation; glycolysis; pyruvate from D-glyceraldehyde 3-phosphate: step 4/5. Catalyzes the reversible conversion of 2-phosphoglycerate (2-PG) into phosphoenolpyruvate (PEP). It is essential for the degradation of carbohydrates via glycolysis. This is Enolase from Trichlorobacter lovleyi (strain ATCC BAA-1151 / DSM 17278 / SZ) (Geobacter lovleyi).